The primary structure comprises 827 residues: MTKLSAQVKGSLNITTPGVQIWRIEAMQMVPVPSNSFGSFFDGDCYVIQAIHKTGSNLSYDIHYWIGQASSQDEQGAAAIYTTQMDDFLKGRAVQHREVQGNESDTFRGYFKKGIVIRKGGVASGMKQVETNSYDIQRLLHVKGKRNVVAGEVEMSWKSFNRGDVFLLDLGKLIIQWNGPESNHMERLRGMNLAKEIRDQERGGRTYVGVVDGEDEKASPQLMEIMNHVLGQRKELKAAVADTVVEPALKAALKLYHVSDSEGKVVVREIATQPLTQDLLSHEDCYILDQGGLKIYVWKGKNANAQEKKEAMNQALNFIKAKQYPPSTQVELQNDGAESAVFQQLFQKWTVPNRTTGLGKTHTVGSVAKVEQVKFDAMSMHVQPQVAAQQKMVDDGSGEVQMWRIENLELVPVNTKWLGHFFGGDCYLLLYTYFINEKPHYLLYIWQGSQASQDEITASAYQAVILDQEYNNEPVQIRVPMGKEPPHLMSIFKGCMVVYQGGTSRANSVEPVPSTRLFQVRGTSANNTKAFEVSPRAASLNSNDVFILKTQSCCYLWCGKGCSGDEREMAKMVADTVSRTEKQVVVEGQEPANFWLALGGKAPYASTKRLQEENLVITPRLFECSNQTGRFLATEIPDFNQDDLEEDDVFLLDVWDQVFFWIGKNANEDEKKAAATTVQEYLKTHPGGRDLETPIIVVKQGHEPPTFTGWFLAWDPFKWNNSKSYEDLKAELGNSGDWSQITAELTSSKPEAFNANSNLSSGPLPIFPLEQLVNKPTEELPEGVDPSRREEHLSIEDFTRALGMTPSAFWALPRWKQQNLKKEKGLF.

Residues 1-126 (MTKLSAQVKG…IRKGGVASGM (126 aa)) form a necessary for homodimerization region. Residues 1–734 (MTKLSAQVKG…YEDLKAELGN (734 aa)) are core. A Gelsolin-like 1 repeat occupies 27–76 (MQMVPVPSNSFGSFFDGDCYVIQAIHKTGSNLSYDIHYWIGQASSQDEQG). 2 LPA/PIP2-binding site regions span residues 112–119 (KKGIVIRK) and 138–146 (RLLHVKGKR). Gelsolin-like repeat units lie at residues 148-188 (VVAG…MERL) and 265-309 (VVVR…QEKK). Position 366 is a phosphoserine (Ser-366). Gelsolin-like repeat units lie at residues 407–457 (NLEL…DEIT), 528–568 (TKAF…DERE), and 631–672 (FLAT…DEKK). At Ser-735 the chain carries Phosphoserine. Residues 735-827 (SGDWSQITAE…QNLKKEKGLF (93 aa)) are headpiece. One can recognise an HP domain in the interval 761–827 (SGPLPIFPLE…QNLKKEKGLF (67 aa)). The tract at residues 816–824 (KQQNLKKEK) is LPA/PIP2-binding site 3.

It belongs to the villin/gelsolin family. In terms of assembly, monomer. Homodimer; homodimerization is necessary for actin-bundling. Associates with F-actin; phosphorylation at tyrosine residues decreases the association with F-actin. Interacts (phosphorylated at C-terminus tyrosine phosphorylation sites) with PLCG1 (via the SH2 domains). Interacts (phosphorylated form) with PLCG1; the interaction is enhanced by hepatocyte growth factor (HGF). In terms of processing, phosphorylated on tyrosine residues by SRC. The unphosphorylated form increases the initial rate of actin-nucleating activity, whereas the tyrosine-phosphorylated form inhibits actin-nucleating activity, enhances actin-bundling activity and enhances actin-severing activity by reducing high Ca(2+) requirements. The tyrosine-phosphorylated form does not regulate actin-capping activity. Tyrosine phosphorylation is essential for cell migration: tyrosine phosphorylation sites in the N-terminus half regulate actin reorganization and cell morphology, whereas tyrosine phosphorylation sites in the C-terminus half regulate cell migration via interaction with PLCG1. Tyrosine phosphorylation is induced by epidermal growth factor (EGF) and stimulates cell migration.

It localises to the cytoplasm. The protein localises to the cytoskeleton. Its subcellular location is the cell projection. The protein resides in the lamellipodium. It is found in the ruffle. It localises to the microvillus. The protein localises to the filopodium tip. Its subcellular location is the filopodium. Functionally, epithelial cell-specific Ca(2+)-regulated actin-modifying protein that modulates the reorganization of microvillar actin filaments. Plays a role in the actin nucleation, actin filament bundle assembly, actin filament capping and severing. Binds phosphatidylinositol 4,5-bisphosphate (PIP2) and lysophosphatidic acid (LPA); binds LPA with higher affinity than PIP2. Binding to LPA increases its phosphorylation by SRC and inhibits all actin-modifying activities. Binding to PIP2 inhibits actin-capping and -severing activities but enhances actin-bundling activity. Regulates the intestinal epithelial cell morphology, cell invasion, cell migration and apoptosis. Protects against apoptosis induced by dextran sodium sulfate (DSS) in the gastrointestinal epithelium. Appears to regulate cell death by maintaining mitochondrial integrity. Enhances hepatocyte growth factor (HGF)-induced epithelial cell motility, chemotaxis and wound repair. The sequence is that of Villin-1 (VIL1) from Bos taurus (Bovine).